We begin with the raw amino-acid sequence, 403 residues long: Arginine biosynthesis bifunctional protein ArgJ (403 aa).

Residues Thr151, Lys177, Thr188, Glu275, Asn398, and Ser403 each contribute to the substrate site. The active-site Nucleophile is Thr188.

The protein belongs to the ArgJ family. Heterotetramer of two alpha and two beta chains.

Its subcellular location is the cytoplasm. It catalyses the reaction N(2)-acetyl-L-ornithine + L-glutamate = N-acetyl-L-glutamate + L-ornithine. It carries out the reaction L-glutamate + acetyl-CoA = N-acetyl-L-glutamate + CoA + H(+). It participates in amino-acid biosynthesis; L-arginine biosynthesis; L-ornithine and N-acetyl-L-glutamate from L-glutamate and N(2)-acetyl-L-ornithine (cyclic): step 1/1. It functions in the pathway amino-acid biosynthesis; L-arginine biosynthesis; N(2)-acetyl-L-ornithine from L-glutamate: step 1/4. Functionally, catalyzes two activities which are involved in the cyclic version of arginine biosynthesis: the synthesis of N-acetylglutamate from glutamate and acetyl-CoA as the acetyl donor, and of ornithine by transacetylation between N(2)-acetylornithine and glutamate. The polypeptide is Arginine biosynthesis bifunctional protein ArgJ (Caulobacter vibrioides (strain ATCC 19089 / CIP 103742 / CB 15) (Caulobacter crescentus)).